A 61-amino-acid polypeptide reads, in one-letter code: UPF0434 protein Bfl377 (61 aa).

It belongs to the UPF0434 family.

The protein is UPF0434 protein Bfl377 of Blochmanniella floridana.